Here is a 205-residue protein sequence, read N- to C-terminus: UPF0301 protein AZC_0488 (205 aa).

This sequence belongs to the UPF0301 (AlgH) family.

In Azorhizobium caulinodans (strain ATCC 43989 / DSM 5975 / JCM 20966 / LMG 6465 / NBRC 14845 / NCIMB 13405 / ORS 571), this protein is UPF0301 protein AZC_0488.